Consider the following 278-residue polypeptide: Sulfur carrier protein FdhD (278 aa).

The active-site Cysteine persulfide intermediate is Cys-121. 260 to 265 (FCKPGR) lines the Mo-bis(molybdopterin guanine dinucleotide) pocket.

The protein belongs to the FdhD family.

The protein localises to the cytoplasm. Functionally, required for formate dehydrogenase (FDH) activity. Acts as a sulfur carrier protein that transfers sulfur from IscS to the molybdenum cofactor prior to its insertion into FDH. The sequence is that of Sulfur carrier protein FdhD from Salmonella typhi.